Reading from the N-terminus, the 642-residue chain is Threonine--tRNA ligase (642 aa).

Positions 1–61 (MPVITLPDGS…ETDAELSIIT (61 aa)) constitute a TGS domain. The interval 243-534 (DHRKIGKQLD…LIEEYAGRFP (292 aa)) is catalytic. 3 residues coordinate Zn(2+): cysteine 334, histidine 385, and histidine 511.

The protein belongs to the class-II aminoacyl-tRNA synthetase family. Homodimer. It depends on Zn(2+) as a cofactor.

It is found in the cytoplasm. It catalyses the reaction tRNA(Thr) + L-threonine + ATP = L-threonyl-tRNA(Thr) + AMP + diphosphate + H(+). In terms of biological role, catalyzes the attachment of threonine to tRNA(Thr) in a two-step reaction: L-threonine is first activated by ATP to form Thr-AMP and then transferred to the acceptor end of tRNA(Thr). Also edits incorrectly charged L-seryl-tRNA(Thr). The protein is Threonine--tRNA ligase of Shewanella oneidensis (strain ATCC 700550 / JCM 31522 / CIP 106686 / LMG 19005 / NCIMB 14063 / MR-1).